A 279-amino-acid polypeptide reads, in one-letter code: Eukaryotic translation initiation factor 3 subunit G (279 aa).

Disordered stretches follow at residues 1-26 (MSTG…IANP), 66-115 (RKNW…KAHE), and 152-171 (TPSG…AAGA). Serine 78 is modified (phosphoserine). The span at 102–115 (KQDEKKEEEDKAHE) shows a compositional bias: basic and acidic residues. Residues 152-163 (TPSGTTPEPTSE) show a composition bias toward low complexity. Residues 197–276 (TTLKVSQLNS…LILHLEWSKK (80 aa)) enclose the RRM domain.

It belongs to the eIF-3 subunit G family. Component of the eukaryotic translation initiation factor 3 (eIF-3) complex.

It localises to the cytoplasm. RNA-binding component of the eukaryotic translation initiation factor 3 (eIF-3) complex, which is involved in protein synthesis of a specialized repertoire of mRNAs and, together with other initiation factors, stimulates binding of mRNA and methionyl-tRNAi to the 40S ribosome. The eIF-3 complex specifically targets and initiates translation of a subset of mRNAs involved in cell proliferation. This subunit can bind 18S rRNA. The protein is Eukaryotic translation initiation factor 3 subunit G of Candida albicans (strain SC5314 / ATCC MYA-2876) (Yeast).